Consider the following 296-residue polypeptide: Ribonuclease HIII (296 aa).

One can recognise an RNase H type-2 domain in the interval 80-296 (LALIGSDEVG…NTKKAYQRLK (217 aa)). 3 residues coordinate a divalent metal cation: Asp86, Glu87, and Asp191.

Belongs to the RNase HII family. RnhC subfamily. It depends on Mn(2+) as a cofactor. Mg(2+) serves as cofactor.

The protein localises to the cytoplasm. The enzyme catalyses Endonucleolytic cleavage to 5'-phosphomonoester.. Its function is as follows. Endonuclease that specifically degrades the RNA of RNA-DNA hybrids. The protein is Ribonuclease HIII of Streptococcus thermophilus (strain ATCC BAA-250 / LMG 18311).